The sequence spans 200 residues: Imidazoleglycerol-phosphate dehydratase (200 aa).

The protein belongs to the imidazoleglycerol-phosphate dehydratase family.

The protein localises to the cytoplasm. It catalyses the reaction D-erythro-1-(imidazol-4-yl)glycerol 3-phosphate = 3-(imidazol-4-yl)-2-oxopropyl phosphate + H2O. It functions in the pathway amino-acid biosynthesis; L-histidine biosynthesis; L-histidine from 5-phospho-alpha-D-ribose 1-diphosphate: step 6/9. This is Imidazoleglycerol-phosphate dehydratase from Bifidobacterium animalis subsp. lactis (strain AD011).